The primary structure comprises 370 residues: Myomodulin neuropeptides 1 (370 aa).

The first 18 residues, 1 to 18 (MQVYMLLPLAVFASLTYQ), serve as a signal peptide directing secretion. Positions 19-50 (GACEETAAAQTSSDASTSSASSEHAENELSRA) are excised as a propeptide. Residues 28–40 (QTSSDASTSSASS) are compositionally biased toward low complexity. The segment at 28–52 (QTSSDASTSSASSEHAENELSRAKR) is disordered. Leucine 60 and leucine 69 each carry leucine amide. Residues 73 to 190 (GGPVEPESEE…EPEEGGLGEE (118 aa)) constitute a propeptide that is removed on maturation. A leucine amide mark is found at leucine 199 and leucine 209. Basic and acidic residues predominate over residues 210–226 (GKREGEEGDEMDKKQDE). A disordered region spans residues 210-230 (GKREGEEGDEMDKKQDESLND). Positions 213–237 (EGEEGDEMDKKQDESLNDDFENDDI) are excised as a propeptide. Leucine 246, leucine 256, leucine 266, leucine 276, leucine 286, leucine 296, leucine 306, leucine 316, leucine 326, leucine 336, and leucine 346 each carry leucine amide. A disordered region spans residues 344–370 (LRLGKRDDDEKEKKSLNMSRLGKRSTQ). Residues 347–358 (GKRDDDEKEKKS) are compositionally biased toward basic and acidic residues. The propeptide occupies 350–355 (DDDEKE). Position 364 is a leucine amide (leucine 364). A propeptide spanning residues 368–370 (STQ) is cleaved from the precursor.

As to expression, expressed in all ganglia of the CNS, but only in a subset of neurons including L10 in the abdominal ganglion and B16 in the buccal ganglion.

The protein localises to the secreted. Its function is as follows. Exogenous application of myomodulins potentiates ARC muscle contraction. This is Myomodulin neuropeptides 1 (MYOMOD1) from Aplysia californica (California sea hare).